Reading from the N-terminus, the 920-residue chain is Anoctamin-4 (920 aa).

Over 1-323 (METSSSGITN…LYFAWLGWYT (323 aa)) the chain is Cytoplasmic. The tract at residues 38–64 (KDDDSLLHPGNLTSTSDDASRLEAGGE) is disordered. Residues 324–344 (GMLFPAAFIGLFVFLYGVITL) traverse the membrane as a helical segment. The Extracellular segment spans residues 345-389 (DHCQVSKEVCQATDIIMCPVCDKYCPFMRLSDSCVYAKVTHLFDN). A helical membrane pass occupies residues 390-410 (GATVFFAVFMAVWATVFLEFW). Over 411–470 (KRRRAVIAYDWDLIDWEEEEEEIRPQFEAKYSKKERMNPISGKPEPYQAFADKCSRLIVS) the chain is Cytoplasmic. Residues 471-491 (ASGIFFMICVVIAAVFGIVIY) traverse the membrane as a helical segment. Residues 492-512 (RVVTVSTFAAFKWALIRNNSQ) are Extracellular-facing. A glycan (N-linked (GlcNAc...) asparagine) is linked at asparagine 509. The helical transmembrane segment at 513–533 (VATTGTAVCINFCIIMLLNVL) threads the bilayer. At 534-560 (YEKVALLLTNLEQPRTESEWENSFTLK) the chain is on the cytoplasmic side. Residues 561 to 581 (MFLFQFVNLNSSTFYIAFFLG) form a helical membrane-spanning segment. Residues 582–680 (RFTGHPGAYL…AYGLFDEYLE (99 aa)) are Extracellular-facing. Residues 681 to 701 (MILQFGFTTIFVAAFPLAPLL) traverse the membrane as a helical segment. Over 702-733 (ALLNNIIEIRLDAYKFVTQWRRPLASRAKDIG) the chain is Cytoplasmic. Residues 734-754 (IWYGILEGIGILSVITNAFVI) traverse the membrane as a helical segment. At 755-850 (AITSDFIPRL…QFWHVLAARL (96 aa)) the chain is on the extracellular side. N-linked (GlcNAc...) asparagine glycans are attached at residues asparagine 789 and asparagine 802. A helical membrane pass occupies residues 851 to 871 (AFIIVFEHLVFCIKHLISYLI). Over 872 to 920 (PDLPKDLRDRMRREKYLIQEMMYEAELERLQKERKERKKNGKAHHNEWP) the chain is Cytoplasmic.

Belongs to the anoctamin family.

Its subcellular location is the cell membrane. It catalyses the reaction a 1,2-diacyl-sn-glycero-3-phospho-L-serine(in) = a 1,2-diacyl-sn-glycero-3-phospho-L-serine(out). It carries out the reaction a beta-D-galactosyl-(1&lt;-&gt;1')-N-acylsphing-4-enine(out) = a beta-D-galactosyl-(1&lt;-&gt;1')-N-acylsphing-4-enine(in). The enzyme catalyses a 1,2-diacyl-sn-glycero-3-phosphocholine(in) = a 1,2-diacyl-sn-glycero-3-phosphocholine(out). Its function is as follows. Has calcium-dependent phospholipid scramblase activity; scrambles phosphatidylserine, phosphatidylcholine and galactosylceramide. Does not exhibit calcium-activated chloride channel (CaCC) activity. The sequence is that of Anoctamin-4 from Bos taurus (Bovine).